The following is a 689-amino-acid chain: Solute carrier organic anion transporter family member 1B2 (689 aa).

Over 1-26 (MDQTQHPSKAAQPLRSEKTRHCDGFR) the chain is Cytoplasmic. Residues 27–46 (IFLAALSFSYICKALGGVIM) form a helical membrane-spanning segment. At 47 to 65 (KSSITQIERRFDIPSSISG) the chain is on the extracellular side. Residues 66-86 (LIDGGFEIGNLLVIVFVSYFG) traverse the membrane as a helical segment. At 87 to 92 (SKLHRP) the chain is on the cytoplasmic side. Residues 93-117 (KLIGTGCFIMGIGSILTALPHFFMG) traverse the membrane as a helical segment. The Extracellular segment spans residues 118-163 (YYRYATENDISSLHNSTLTCLVNQTTSLTGTSPEIMEKGCEKGSNS). N-linked (GlcNAc...) asparagine glycosylation is found at N132 and N140. The helical transmembrane segment at 164 to 192 (YTWIYVLMGNMLRGIGETPIVPLGVSYID) threads the bilayer. At 193–211 (DFAKEGNSSMYLGTLHTIA) the chain is on the cytoplasmic side. Residues 212 to 232 (MIGPILGFIMSSVFAKLYVDV) form a helical membrane-spanning segment. Residues 233-250 (GYVDLRSVRITPQDARWV) lie on the Extracellular side of the membrane. Residues 251 to 275 (GAWWLGFIVNGLLCIICSIPFFFLP) form a helical membrane-spanning segment. Residues 276 to 326 (KIPKRSQKERKNSASLHVLKTDEDKNPVTNPTTQEKQAPANLTGFLWSLRS) are Cytoplasmic-facing. Phosphoserine occurs at positions 288 and 290. Residues 327-348 (ILTNEQYVIFLILTLLQISSFI) form a helical membrane-spanning segment. Over 349–368 (GSFTYLFKFIEQQFGQTASQ) the chain is Extracellular. A helical membrane pass occupies residues 369-392 (ANFLLGVITIPTMASGMFLGGYLI). Topologically, residues 393 to 396 (KRLK) are cytoplasmic. Residues 397–420 (LTLLGITKFVFFTTTMAYVFYLSY) traverse the membrane as a helical segment. Residues 421–533 (FLLICENKAF…DKCKTKYYFY (113 aa)) are Extracellular-facing. The Kazal-like domain maps to 448 to 505 (DVPLSYCNSDCICDKNQWEPVCGENGVTYISPCLAGCKSFRGDKKLMNIEFYDCSCVS). 3 cysteine pairs are disulfide-bonded: C454/C484, C460/C480, and C469/C503. N513 is a glycosylation site (N-linked (GlcNAc...) asparagine). A helical transmembrane segment spans residues 534–556 (ITFQVIISFFTALGSTSLMLILI). The Cytoplasmic portion of the chain corresponds to 557 to 565 (RSVQPELKS). The chain crosses the membrane as a helical span at residues 566 to 591 (LGMGFHSLVVRTLGGILAPVYYGALI). The Extracellular segment spans residues 592-625 (DRTCMKWSVTSCGARGACRLYNSRLFGMIYVGLS). A helical membrane pass occupies residues 626-643 (IALKTPILLLYVALIYVM). At 644-689 (KRKMKRNDNKILENGRKFTDEGNPEPVNNNGYSCVPSDEKNSETPL) the chain is on the cytoplasmic side. The segment at 658–689 (GRKFTDEGNPEPVNNNGYSCVPSDEKNSETPL) is disordered. T662 is modified (phosphothreonine). S680 is modified (phosphoserine). A compositionally biased stretch (basic and acidic residues) spans 680 to 689 (SDEKNSETPL).

It belongs to the organo anion transporter (TC 2.A.60) family. Liver specific.

The protein localises to the cell membrane. It carries out the reaction estrone 3-sulfate(out) = estrone 3-sulfate(in). It catalyses the reaction taurocholate(out) = taurocholate(in). The catalysed reaction is prostaglandin E2(out) = prostaglandin E2(in). The enzyme catalyses L-thyroxine(out) = L-thyroxine(in). Its function is as follows. Mediates the Na(+)-independent uptake of organic anions such as taurochlate, bromosulfophthalein and steroid conjugates (estrone 3-sulfate, 17-beta-glucuronosyl estradiol, dehydroepiandrosterone sulfate). Also transports prostaglandin E2 and L-thyroxine (T4). Shows a pH-sensitive substrate specificity which may be ascribed to the protonation state of the binding site and leads to a stimulation of substrate transport in an acidic microenvironment. Hydrogencarbonate/HCO3(-) acts as the probable counteranion that exchanges for organic anions. This Mus musculus (Mouse) protein is Solute carrier organic anion transporter family member 1B2 (Slco1b2).